The chain runs to 277 residues: Formamidopyrimidine-DNA glycosylase (277 aa).

P2 (schiff-base intermediate with DNA) is an active-site residue. The active-site Proton donor is the E3. Residue K60 is the Proton donor; for beta-elimination activity of the active site. Positions 94, 113, and 156 each coordinate DNA. The segment at K241–K275 adopts an FPG-type zinc-finger fold. Residue R265 is the Proton donor; for delta-elimination activity of the active site.

The protein belongs to the FPG family. In terms of assembly, monomer. Requires Zn(2+) as cofactor.

The enzyme catalyses Hydrolysis of DNA containing ring-opened 7-methylguanine residues, releasing 2,6-diamino-4-hydroxy-5-(N-methyl)formamidopyrimidine.. The catalysed reaction is 2'-deoxyribonucleotide-(2'-deoxyribose 5'-phosphate)-2'-deoxyribonucleotide-DNA = a 3'-end 2'-deoxyribonucleotide-(2,3-dehydro-2,3-deoxyribose 5'-phosphate)-DNA + a 5'-end 5'-phospho-2'-deoxyribonucleoside-DNA + H(+). Involved in base excision repair of DNA damaged by oxidation or by mutagenic agents. Acts as a DNA glycosylase that recognizes and removes damaged bases. Has a preference for oxidized purines, such as 7,8-dihydro-8-oxoguanine (8-oxoG). Has AP (apurinic/apyrimidinic) lyase activity and introduces nicks in the DNA strand. Cleaves the DNA backbone by beta-delta elimination to generate a single-strand break at the site of the removed base with both 3'- and 5'-phosphates. The sequence is that of Formamidopyrimidine-DNA glycosylase from Desulforamulus reducens (strain ATCC BAA-1160 / DSM 100696 / MI-1) (Desulfotomaculum reducens).